Reading from the N-terminus, the 370-residue chain is Cytochrome b (370 aa).

Helical transmembrane passes span 30–50 (FGSMLGMVLVFQIVTGTFLAF), 74–96 (WIFRIFHFNGASLFFIFLYLHIF), 109–129 (VWMSGLTIYLLVMMEAFMGYV), and 175–195 (FFVLHFLLPWAILFIVLGHLI). His-80 and His-94 together coordinate heme b. Positions 179 and 193 each coordinate heme b. His-198 is an a ubiquinone binding site. 4 helical membrane-spanning segments follow: residues 221–240 (YIGKDAYNIVVWLVFIVLSL), 284–304 (VLGVIALLMSIVTFYFFALVN), 316–336 (FLVFLFIISSVILSWLGQCMV), and 342–362 (VLSPLFSVIYFGLAYLLLGIF).

It belongs to the cytochrome b family. As to quaternary structure, the main subunits of complex b-c1 are: cytochrome b, cytochrome c1 and the Rieske protein. Requires heme b as cofactor.

It is found in the mitochondrion inner membrane. Its function is as follows. Component of the ubiquinol-cytochrome c reductase complex (complex III or cytochrome b-c1 complex) that is part of the mitochondrial respiratory chain. The b-c1 complex mediates electron transfer from ubiquinol to cytochrome c. Contributes to the generation of a proton gradient across the mitochondrial membrane that is then used for ATP synthesis. This is Cytochrome b (ctb-1) from Caenorhabditis briggsae.